The following is a 666-amino-acid chain: Threonine--tRNA ligase (666 aa).

A TGS domain is found at 7–70 (QQVTLTVTLP…TADCTAEIIT (64 aa)). The segment at 253-555 (DHRKLGTELE…LIEHTAGNFP (303 aa)) is catalytic. Residues Cys-351, His-402, and His-532 each contribute to the Zn(2+) site.

It belongs to the class-II aminoacyl-tRNA synthetase family. In terms of assembly, homodimer. Zn(2+) is required as a cofactor.

It is found in the cytoplasm. It carries out the reaction tRNA(Thr) + L-threonine + ATP = L-threonyl-tRNA(Thr) + AMP + diphosphate + H(+). In terms of biological role, catalyzes the attachment of threonine to tRNA(Thr) in a two-step reaction: L-threonine is first activated by ATP to form Thr-AMP and then transferred to the acceptor end of tRNA(Thr). Also edits incorrectly charged L-seryl-tRNA(Thr). This is Threonine--tRNA ligase from Chlorobium phaeovibrioides (strain DSM 265 / 1930) (Prosthecochloris vibrioformis (strain DSM 265)).